Reading from the N-terminus, the 451-residue chain is Pre-mRNA-splicing factor PRP46 (451 aa).

7 WD repeats span residues 137–168, 180–210, 222–252, 264–294, 306–335, 348–377, and 397–427; these read GHLG…KVWD, GHVM…KCWD, GHLS…KLWD, GHKG…RLWD, HHKR…RSWG, EKTG…SFYD, and EGER…KIWK.

It belongs to the WD repeat PRL1/PRL2 family. As to quaternary structure, belongs to the CWC complex (or CEF1-associated complex), a spliceosome subcomplex composed of the U2, U5 and U6 snRNAs and at least BUD13, BUD31, BRR2, CDC40, CEF1, CLF1, CUS1, CWC2, CWC15, CWC21, CWC22, CWC23, CWC24, CWC25, CWC27, ECM2, HSH155, IST3, ISY1, LEA1, MSL1, NTC20, PRP8, PRP9, PRP11, PRP19, PRP21, PRP22, PRP45, PRP46, SLU7, SMB1, SMD1, SMD2, SMD3, SMX2, SMX3, SNT309, SNU114, SPP2, SYF1, SYF2, RSE1 and YJU2. Interacts with CEF1, CLF1, NTC20, PRP45 and SYF1.

It localises to the cytoplasm. It is found in the nucleus. In terms of biological role, involved in pre-mRNA splicing. May also be required for cell cycle progression at G2/M. This Saccharomyces cerevisiae (strain ATCC 204508 / S288c) (Baker's yeast) protein is Pre-mRNA-splicing factor PRP46 (PRP46).